The sequence spans 513 residues: Bifunctional purine biosynthesis protein PurH (513 aa).

Positions 1 to 145 constitute an MGS-like domain; that stretch reads MTKKAIISVY…KNFKYITVII (145 aa).

Belongs to the PurH family.

The catalysed reaction is (6R)-10-formyltetrahydrofolate + 5-amino-1-(5-phospho-beta-D-ribosyl)imidazole-4-carboxamide = 5-formamido-1-(5-phospho-D-ribosyl)imidazole-4-carboxamide + (6S)-5,6,7,8-tetrahydrofolate. It carries out the reaction IMP + H2O = 5-formamido-1-(5-phospho-D-ribosyl)imidazole-4-carboxamide. The protein operates within purine metabolism; IMP biosynthesis via de novo pathway; 5-formamido-1-(5-phospho-D-ribosyl)imidazole-4-carboxamide from 5-amino-1-(5-phospho-D-ribosyl)imidazole-4-carboxamide (10-formyl THF route): step 1/1. Its pathway is purine metabolism; IMP biosynthesis via de novo pathway; IMP from 5-formamido-1-(5-phospho-D-ribosyl)imidazole-4-carboxamide: step 1/1. In Caldicellulosiruptor saccharolyticus (strain ATCC 43494 / DSM 8903 / Tp8T 6331), this protein is Bifunctional purine biosynthesis protein PurH.